Reading from the N-terminus, the 662-residue chain is PAN2-PAN3 deadenylation complex subunit PAN3 (662 aa).

Disordered stretches follow at residues 1-26 (MASA…AREN) and 59-131 (TTYQ…RAET). The segment at 26 to 55 (NAKDTLCRNVTIYGRCRYEDKGCAFNHDPH) adopts a C3H1-type zinc-finger fold. A compositionally biased stretch (polar residues) spans 72–85 (DSPSFTPSLLSSNG). Low complexity predominate over residues 86 to 102 (SSPTTASVTAKKAATIS). Positions 114–126 (RNITSRSNTSTPS) are enriched in polar residues. The segment at 265-525 (QTLPNTQLPA…NIDIFITGIS (261 aa)) is pseudokinase domain. ATP-binding positions include Arg-317, 366–373 (DYHPLSKT), and 425–426 (SK). Residues 526 to 564 (SQLMSTFDSALHLDDELTSDLSRELENGRLVRLVTKLNF) are a coiled coil. The segment at 565-662 (VNERPEYEHD…ALLKPTRRLH (98 aa)) is knob domain.

The protein belongs to the protein kinase superfamily. PAN3 family. In terms of assembly, homodimer. Forms a heterotrimer with a catalytic subunit pan2 to form the poly(A)-nuclease (PAN) deadenylation complex. Interacts (via PAM-2 motif) with poly(A)-binding protein pab1 (via PABC domain), conferring substrate specificity of the enzyme complex.

The protein localises to the cytoplasm. Functionally, regulatory subunit of the poly(A)-nuclease (PAN) deadenylation complex, one of two cytoplasmic mRNA deadenylases involved in mRNA turnover. PAN specifically shortens poly(A) tails of RNA and the activity is stimulated by poly(A)-binding protein pab1. PAN deadenylation is followed by rapid degradation of the shortened mRNA tails by the CCR4-NOT complex. Deadenylated mRNAs are then degraded by two alternative mechanisms, namely exosome-mediated 3'-5' exonucleolytic degradation, or deadenylation-dependent mRNA decaping and subsequent 5'-3' exonucleolytic degradation by xrn1. May also be involved in post-transcriptional maturation of mRNA poly(A) tails. pan3 acts as a positive regulator for PAN activity, recruiting the catalytic subunit pan2 to mRNA via its interaction with RNA and with pab1. In Aspergillus oryzae (strain ATCC 42149 / RIB 40) (Yellow koji mold), this protein is PAN2-PAN3 deadenylation complex subunit PAN3.